The chain runs to 176 residues: Superoxide oxidase CybB (176 aa).

Topologically, residues 1 to 7 are cytoplasmic; sequence MENKYSR. Residues 8–29 form a helical membrane-spanning segment; it reads LQISIHWLVFLLVIAAYCAMEF. Histidine 13 serves as a coordination point for heme b. The Periplasmic segment spans residues 30–39; that stretch reads RGFFPRSDRP. A helical membrane pass occupies residues 40–64; sequence LINMIHVSCGISILVLMVVRLLLRL. Heme b is bound at residue histidine 45. The Cytoplasmic portion of the chain corresponds to 65–77; the sequence is KYPTPPIIPKPKP. Residues 78-103 form a helical membrane-spanning segment; that stretch reads MMTGLAHLGHLVIYLLFIALPVIGLV. Residues 104–135 are Periplasmic-facing; it reads MMYNRGNPWFAFGLTMPYASEANFERVDSLKS. Residues 136–158 traverse the membrane as a helical segment; that stretch reads WHETLANLGYFVIGLHAAAALAH. The heme b site is built by histidine 137 and histidine 151. The Cytoplasmic segment spans residues 159–176; it reads HYFWKDNTLLRMMPRKRS.

The protein belongs to the cytochrome b561 family. As to quaternary structure, monomer. Requires heme b as cofactor.

It localises to the cell inner membrane. It catalyses the reaction a ubiquinol + 2 O2 = 2 superoxide + a ubiquinone + 2 H(+). The enzyme catalyses a menaquinol + 2 O2 = 2 superoxide + a menaquinone + 2 H(+). Its activity is regulated as follows. Quinone binding to the enzyme accelerates the reaction with superoxide. B-type di-heme cytochrome. Catalyzes the oxidation of superoxide to molecular oxygen and transfers the extracted electrons to ubiquinone through the two hemes. Can also use menaquinone. The enzyme may be responsible for the detoxification of the superoxide anion produced in the membrane or at its surface. However, it can also efficiently catalyze the formation of superoxide from ubiquinol under physiological conditions. The protein is Superoxide oxidase CybB of Escherichia coli (strain K12).